Here is a 480-residue protein sequence, read N- to C-terminus: ATP synthase subunit beta (480 aa).

153–160 (GGAGVGKT) is an ATP binding site.

It belongs to the ATPase alpha/beta chains family. In terms of assembly, F-type ATPases have 2 components, CF(1) - the catalytic core - and CF(0) - the membrane proton channel. CF(1) has five subunits: alpha(3), beta(3), gamma(1), delta(1), epsilon(1). CF(0) has three main subunits: a(1), b(2) and c(9-12). The alpha and beta chains form an alternating ring which encloses part of the gamma chain. CF(1) is attached to CF(0) by a central stalk formed by the gamma and epsilon chains, while a peripheral stalk is formed by the delta and b chains.

It is found in the cell membrane. The catalysed reaction is ATP + H2O + 4 H(+)(in) = ADP + phosphate + 5 H(+)(out). Its function is as follows. Produces ATP from ADP in the presence of a proton gradient across the membrane. The catalytic sites are hosted primarily by the beta subunits. This Lactobacillus gasseri (strain ATCC 33323 / DSM 20243 / BCRC 14619 / CIP 102991 / JCM 1131 / KCTC 3163 / NCIMB 11718 / NCTC 13722 / AM63) protein is ATP synthase subunit beta.